Here is a 648-residue protein sequence, read N- to C-terminus: Spike protein P3 (648 aa).

As to quaternary structure, interacts with P6.

The protein localises to the virion membrane. P3 protein is necessary for adsorption onto host cells. Attaches to a type IV pilus of the host. The chain is Spike protein P3 (P3) from Pseudomonas savastanoi pv. phaseolicola (Pseudomonas syringae pv. phaseolicola).